A 305-amino-acid chain; its full sequence is Transcription factor bHLH18 (305 aa).

Positions 41–67 are disordered; it reads LKTTHISPNLHPFSSSNPPPPKHQPSS. Over residues 44 to 56 the composition is skewed to polar residues; it reads THISPNLHPFSSS. Positions 122–171 constitute a bHLH domain; sequence SNAQDHILAERKRREKLTQRFVALSALIPGLKKMDKASVLGDAIKHIKYL. The segment at 201 to 224 is disordered; it reads DENHQPSSSSSSDGNRNSSSSNLP. Residues 207-222 show a composition bias toward low complexity; that stretch reads SSSSSSDGNRNSSSSN.

Homodimer. In terms of tissue distribution, expressed in roots.

Its subcellular location is the nucleus. This chain is Transcription factor bHLH18 (BHLH18), found in Arabidopsis thaliana (Mouse-ear cress).